A 434-amino-acid chain; its full sequence is MKSLVLKAAAWLSDLRVAIVLLLLIAACSGLGTAIPQGEPAAFYHERYDAAPWLGVVNGNQLLSWELDHLYTSNWFLLLLAWLGLALLLCSLRRQWPALRASLRWLDYTKPRQLSKLAVATSLDTGDSAAALDQLERQLQQQGWAVRRQQNRLAARRGVIGRVGPLLVHTGLIVFMVGAVVGAFGGQRLERFLAPGRSLELLNPQGDTRLELQLDSFAIQRDPAGRPEQFSSQLLLRDGTGAPAQPAAVSVNHPLRHRGITVYQADWGLAAVTMQLGQSPLLQLPLQTFPELGEQVWGLVLPTRPDGSDPVLLALQSELGPVEVYGADSQQLGLLTVGGESQEILGLPLRIADVMPASGLLIKRDPGVPLVYAGFAITLLGGGLSLIATRQLWAISESGRLHIAGLCNRNLVAFADELPKLGSSAITGAPHDAR.

3 helical membrane passes run 15–35 (LRVA…GTAI), 73–93 (SNWF…CSLR), and 163–183 (VGPL…VVGA).

Belongs to the Ccs1/CcsB family. As to quaternary structure, may interact with CcsA.

Its subcellular location is the cellular thylakoid membrane. Functionally, required during biogenesis of c-type cytochromes (cytochrome c6 and cytochrome f) at the step of heme attachment. This Synechococcus sp. (strain RCC307) protein is Cytochrome c biogenesis protein CcsB.